A 227-amino-acid polypeptide reads, in one-letter code: Ribonuclease 3 (227 aa).

In terms of domain architecture, RNase III spans 5–127 (LNALQLRLQH…LIGAVYLDAG (123 aa)). Residue Glu40 coordinates Mg(2+). Asp44 is an active-site residue. Positions 113 and 116 each coordinate Mg(2+). Glu116 is an active-site residue. Residues 154–224 (DAKTALQEWL…ATAMLELLKA (71 aa)) form the DRBM domain.

Belongs to the ribonuclease III family. Homodimer. Requires Mg(2+) as cofactor.

It localises to the cytoplasm. It carries out the reaction Endonucleolytic cleavage to 5'-phosphomonoester.. Its function is as follows. Digests double-stranded RNA. Involved in the processing of primary rRNA transcript to yield the immediate precursors to the large and small rRNAs (23S and 16S). Processes some mRNAs, and tRNAs when they are encoded in the rRNA operon. Processes pre-crRNA and tracrRNA of type II CRISPR loci if present in the organism. This chain is Ribonuclease 3, found in Delftia acidovorans (strain DSM 14801 / SPH-1).